The following is a 107-amino-acid chain: MGVVLPTLIVYAFLLFFSSSSAASLQRPSGGLGQGKKEIARSGLPGQIVDQKRLGGPGSVPPMCRLKCGKCEPCKAVHVPIQPGLIMPLEYYPEAWRCKCGNKLFMP.

Positions M1 to A22 are cleaved as a signal peptide. 3 disulfide bridges follow: C64–C98, C68–C74, and C71–C100.

This sequence belongs to the plant cysteine rich small secretory peptide family. Epidermal patterning factor subfamily. As to quaternary structure, interacts with ERECTA. As to expression, expressed asymetically in the hypocotyl, on the side proximal to the folded cotyledons at germination. Detected in developing flowers, the chalazal region of ovules and near the root apex, but not in inflorescence stems. Expressed in cotyledons, flowers, adult leaves and fruits.

The protein localises to the secreted. Its function is as follows. Controls stomatal patterning. Mediates differentiation of stomatal lineage cells to pavement cells and stomatal development inhibition. TMM (AC Q9SSD1) functions to dampen or block CLL1 signaling. Acts as a growth-regulatory ligand for ERECTA family receptors. Promotes fruit growth and fertility. In Arabidopsis thaliana (Mouse-ear cress), this protein is EPIDERMAL PATTERNING FACTOR-like protein 5.